We begin with the raw amino-acid sequence, 98 residues long: Large ribosomal subunit protein eL14 (98 aa).

It belongs to the eukaryotic ribosomal protein eL14 family.

The sequence is that of Large ribosomal subunit protein eL14 from Hyperthermus butylicus (strain DSM 5456 / JCM 9403 / PLM1-5).